A 139-amino-acid polypeptide reads, in one-letter code: Transthyretin-like protein 5 (139 aa).

A signal peptide spans 1 to 15; it reads MKLIILLCLVASSYA.

This sequence belongs to the nematode transthyretin-like family.

The protein localises to the secreted. The protein is Transthyretin-like protein 5 (ttr-5) of Caenorhabditis elegans.